The following is a 341-amino-acid chain: Protein P3 (341 aa).

The tract at residues 46-175 (RARQAANPVS…QTKNAPDANE (130 aa)) is disordered. The span at 97-116 (KSKRAVRREKRRTAAKKATN) shows a compositional bias: basic residues. Low complexity predominate over residues 142 to 152 (SYLSSLLSSPS).

It belongs to the nepovirus protein P3 family.

This chain is Protein P3, found in Vitis rupestris (Grape).